We begin with the raw amino-acid sequence, 496 residues long: MGFLSLVGNSFGCSASGERLVSAARDGDLQEARALLEYNPRLARYSTFGGRNSPLHYAAAQGHHEIVSLLLESGVEINLRNYRGQTALMQACQYGHWEVVQTLMLFNANVHRTDYLNGGSALHFAALHGHARCLRLVLADYVPSMPNFWNSMKDSLSEEGPSADLDEDGLFKMVNQKADGGLTPLHMAALNGHVECVQLLLDLGASVIEATIEDGTTIDLIGAGSTPLHYAACGGNAVCCQLLIARGASLSAQNASGWTPLMVARSWHRNSLEEILSKEPESRIRTVPSPYLCLPLMSIMSIAREFGWRYLNQSPVCIDPCAVCLEGSCSVAAEGCKHEFCTRCALYLCSTSYTSVSPAGAIPCPLCRHPIIAFTALPGTSPIRELPRNSLSLSFCTTCPAVNSDSTPSIASHLYRTEFQCARMPPMGSSSFRSLSCQRLPAMKLNPSFCMGAMDTNPCLIRCSRFGPSFRRSASQGESSRRAWPLTFDPIAATGS.

ANK repeat units lie at residues 50–79 (GRNS…EINL), 83–112 (RGQT…NVHR), 117–147 (NGGS…SMPN), 180–209 (GGLT…SVIE), and 223–252 (AGST…SLSA). An RING-type zinc finger spans residues 321–368 (CAVCLEGSCSVAAEGCKHEFCTRCALYLCSTSYTSVSPAGAIPCPLCR).

The catalysed reaction is S-ubiquitinyl-[E2 ubiquitin-conjugating enzyme]-L-cysteine + [acceptor protein]-L-lysine = [E2 ubiquitin-conjugating enzyme]-L-cysteine + N(6)-ubiquitinyl-[acceptor protein]-L-lysine.. Its pathway is protein modification; protein ubiquitination. This is Probable E3 ubiquitin-protein ligase XBOS32 (XBOS32) from Oryza sativa subsp. japonica (Rice).